A 381-amino-acid chain; its full sequence is Curved DNA-binding protein (381 aa).

S8 carries the phosphoserine modification. A Phosphothreonine modification is found at T362. A Nuclear localization signal motif is present at residues 368-375; it reads KNKKKSKK.

It belongs to the peptidase M24 family.

It is found in the nucleus. Functionally, a non-essential protein that preferentially binds curved DNA. Binds non-curved DNA with a much lower affinity. This Schizosaccharomyces pombe (strain 972 / ATCC 24843) (Fission yeast) protein is Curved DNA-binding protein (cdb4).